A 126-amino-acid polypeptide reads, in one-letter code: KH homology domain-containing protein 1B (126 aa).

One can recognise a KH domain in the interval 19 to 78 (PLVFDMEEDQEDYIFGPDDEYLHTLEVHSNTLIQLERWFSPTGQTRVTVVGPLKARLWVM).

This sequence belongs to the KHDC1 family.

This chain is KH homology domain-containing protein 1B (Khdc1b), found in Mus musculus (Mouse).